The sequence spans 144 residues: Eukaryotic translation initiation factor 1A (144 aa).

The segment covering 1-15 (MPKNKGKGGKNRKRG) has biased composition (basic residues). Disordered regions lie at residues 1-25 (MPKN…DKRE) and 120-144 (DVDG…IDKI). The segment covering 16–25 (KNEADDDKRE) has biased composition (basic and acidic residues). An S1-like domain is found at 22–96 (DKRELVFKED…DKADVILKYM (75 aa)).

It belongs to the eIF-1A family.

Functionally, seems to be required for maximal rate of protein biosynthesis. Enhances ribosome dissociation into subunits and stabilizes the binding of the initiator Met-tRNA(I) to 40 S ribosomal subunits. The protein is Eukaryotic translation initiation factor 1A of Triticum aestivum (Wheat).